The primary structure comprises 1023 residues: Sodium/potassium-transporting ATPase subunit alpha-1 (1023 aa).

A propeptide spanning residues 1 to 5 (MGKGV) is cleaved from the precursor. The span at 1-11 (MGKGVGRDKYE) shows a compositional bias: basic and acidic residues. The interval 1 to 38 (MGKGVGRDKYEPAAVSEHGDKKGKKAKKERDMDELKKE) is disordered. Residues 6 to 87 (GRDKYEPAAV…NALTPPPTTP (82 aa)) are Cytoplasmic-facing. K9 carries the N6-acetyllysine modification. Y10 is subject to Phosphotyrosine. S16 carries the phosphoserine; by PKC modification. K21 carries the N6-acetyllysine modification. The span at 28-38 (KERDMDELKKE) shows a compositional bias: basic and acidic residues. Residues S40 and S47 each carry the phosphoserine modification. Residues 82 to 84 (PPP) form a phosphoinositide-3 kinase binding region. A helical membrane pass occupies residues 88–108 (EWVKFCRQLFGGFSMLLWIGA). At 109–131 (ILCFLAYGILAATEEDFDNDNLY) the chain is on the extracellular side. Residues 132 to 152 (LGVVLAAVVIITGCFSYYQEA) form a helical membrane-spanning segment. Residues 153-288 (KSSKIMESFK…GGQTPIAAEI (136 aa)) are Cytoplasmic-facing. The segment at 216–235 (SSLTGESEPQTRSPDFTNEN) is disordered. S228 is modified (phosphoserine). Y260 carries the phosphotyrosine modification. The helical transmembrane segment at 289–308 (EHFIHIITGVAVFLGVSFFI) threads the bilayer. Residues 309–320 (LSLILEYTWLEA) lie on the Extracellular side of the membrane. Residues 321-338 (VIFLIGIIVANVPEGLLA) form a helical membrane-spanning segment. Residues 339-772 (TVTVCLTLTA…EEGRLIFDNL (434 aa)) are Cytoplasmic-facing. D376 functions as the 4-aspartylphosphate intermediate in the catalytic mechanism. A phosphoserine mark is found at S452 and S484. Residue K487 coordinates ATP. Y542 is subject to Phosphotyrosine. The interval 596-717 (RAAVPDAVGK…QGAIVAVTGD (122 aa)) is mediates interaction with SCN7A. K661 carries the post-translational modification N6-succinyllysine. Residues S668 and S675 each carry the phosphoserine modification. Mg(2+) contacts are provided by D717 and D721. The helical transmembrane segment at 773–792 (KKSIAYTLTSNIPEITPFLI) threads the bilayer. The Extracellular segment spans residues 793-802 (FIIANIPLPL). The chain crosses the membrane as a helical span at residues 803-823 (GTVTILCIDLGTDMVPAISLA). At 824–843 (YEQAESDIMKRQPRNPKTDK) the chain is on the cytoplasmic side. Residues 844–866 (LVNERLISMAYGQIGMIQALGGF) traverse the membrane as a helical segment. The Extracellular portion of the chain corresponds to 867–918 (FTYFVILAENGFLPFHLLGIRVDWDDRWINDVEDSYGQQWTYEQRKIVEFTC). Residues 919–938 (HTAFFVSIVVVQWADLVICK) traverse the membrane as a helical segment. The Cytoplasmic portion of the chain corresponds to 939 to 951 (TRRNSVFQQGMKN). S943 carries the phosphoserine; by PKA modification. Residues 952–970 (KILIFGLFEETALAAFLSY) traverse the membrane as a helical segment. Residues 971 to 985 (CPGMGVALRMYPLKP) lie on the Extracellular side of the membrane. A helical membrane pass occupies residues 986–1006 (TWWFCAFPYSLLIFVYDEIRK). Residues 1007 to 1023 (LIIRRRPGGWVEKETYY) are Cytoplasmic-facing.

This sequence belongs to the cation transport ATPase (P-type) (TC 3.A.3) family. Type IIC subfamily. The sodium/potassium-transporting ATPase is composed of a catalytic alpha subunit, an auxiliary non-catalytic beta subunit and an additional regulatory subunit. Interacts with regulatory subunit FXYD1. Interacts with regulatory subunit FXYD3. Interacts with SIK1. Interacts with SLC35G1 and STIM1. Interacts with CLN3; this interaction regulates the sodium/potassium-transporting ATPase complex localization at the plasma membrane. Interacts with SCN7A; activates ATP1A1 P-type sodium:potassium-exchanging transporter activity which indirectly signals to nearby neurons to regulate sodium homeostasis. Phosphorylation on Tyr-10 modulates pumping activity. Phosphorylation of Ser-943 by PKA modulates the response of ATP1A1 to PKC. Dephosphorylation by protein phosphatase 2A (PP2A) following increases in intracellular sodium, leading to increase catalytic activity. Expressed in endocardial endothelial cells.

It localises to the cell membrane. The protein resides in the basolateral cell membrane. The protein localises to the sarcolemma. It is found in the cell projection. Its subcellular location is the axon. It localises to the melanosome. It carries out the reaction K(+)(out) + Na(+)(in) + ATP + H2O = K(+)(in) + Na(+)(out) + ADP + phosphate + H(+). Its function is as follows. This is the catalytic component of the active enzyme, which catalyzes the hydrolysis of ATP coupled with the exchange of sodium and potassium ions across the plasma membrane. This action creates the electrochemical gradient of sodium and potassium ions, providing the energy for active transport of various nutrients. Could also be part of an osmosensory signaling pathway that senses body-fluid sodium levels and controls salt intake behavior as well as voluntary water intake to regulate sodium homeostasis. The polypeptide is Sodium/potassium-transporting ATPase subunit alpha-1 (ATP1A1) (Oryctolagus cuniculus (Rabbit)).